Consider the following 212-residue polypeptide: Large ribosomal subunit protein uL3 (212 aa).

Over residues 135–155 (ATHGNSVSHRAHGSTGQNQSP) the composition is skewed to polar residues. A disordered region spans residues 135-162 (ATHGNSVSHRAHGSTGQNQSPGKVFKGK). At glutamine 153 the chain carries N5-methylglutamine.

It belongs to the universal ribosomal protein uL3 family. In terms of assembly, part of the 50S ribosomal subunit. Forms a cluster with proteins L14 and L19. Post-translationally, methylated by PrmB.

In terms of biological role, one of the primary rRNA binding proteins, it binds directly near the 3'-end of the 23S rRNA, where it nucleates assembly of the 50S subunit. The polypeptide is Large ribosomal subunit protein uL3 (Psychrobacter arcticus (strain DSM 17307 / VKM B-2377 / 273-4)).